A 136-amino-acid polypeptide reads, in one-letter code: Small ribosomal subunit protein uS9 (136 aa).

Residues 115–136 (KVKERKKPGLRKARKARQFSKR) form a disordered region. Positions 117–136 (KERKKPGLRKARKARQFSKR) are enriched in basic residues.

The protein belongs to the universal ribosomal protein uS9 family.

This is Small ribosomal subunit protein uS9 from Mycoplasmopsis pulmonis (strain UAB CTIP) (Mycoplasma pulmonis).